The following is a 316-amino-acid chain: 4-hydroxy-3-methylbut-2-enyl diphosphate reductase (316 aa).

C18 contributes to the [4Fe-4S] cluster binding site. The (2E)-4-hydroxy-3-methylbut-2-enyl diphosphate site is built by H47 and H80. Dimethylallyl diphosphate is bound by residues H47 and H80. Isopentenyl diphosphate-binding residues include H47 and H80. Residue C102 coordinates [4Fe-4S] cluster. Residue H130 coordinates (2E)-4-hydroxy-3-methylbut-2-enyl diphosphate. Residue H130 participates in dimethylallyl diphosphate binding. H130 is a binding site for isopentenyl diphosphate. The active-site Proton donor is the E132. T171 provides a ligand contact to (2E)-4-hydroxy-3-methylbut-2-enyl diphosphate. C201 is a [4Fe-4S] cluster binding site. (2E)-4-hydroxy-3-methylbut-2-enyl diphosphate contacts are provided by S229, S230, N231, and S274. Dimethylallyl diphosphate-binding residues include S229, S230, N231, and S274. Positions 229, 230, 231, and 274 each coordinate isopentenyl diphosphate.

Belongs to the IspH family. Requires [4Fe-4S] cluster as cofactor.

The enzyme catalyses isopentenyl diphosphate + 2 oxidized [2Fe-2S]-[ferredoxin] + H2O = (2E)-4-hydroxy-3-methylbut-2-enyl diphosphate + 2 reduced [2Fe-2S]-[ferredoxin] + 2 H(+). The catalysed reaction is dimethylallyl diphosphate + 2 oxidized [2Fe-2S]-[ferredoxin] + H2O = (2E)-4-hydroxy-3-methylbut-2-enyl diphosphate + 2 reduced [2Fe-2S]-[ferredoxin] + 2 H(+). It functions in the pathway isoprenoid biosynthesis; dimethylallyl diphosphate biosynthesis; dimethylallyl diphosphate from (2E)-4-hydroxy-3-methylbutenyl diphosphate: step 1/1. It participates in isoprenoid biosynthesis; isopentenyl diphosphate biosynthesis via DXP pathway; isopentenyl diphosphate from 1-deoxy-D-xylulose 5-phosphate: step 6/6. Catalyzes the conversion of 1-hydroxy-2-methyl-2-(E)-butenyl 4-diphosphate (HMBPP) into a mixture of isopentenyl diphosphate (IPP) and dimethylallyl diphosphate (DMAPP). Acts in the terminal step of the DOXP/MEP pathway for isoprenoid precursor biosynthesis. In Paracoccus denitrificans (strain Pd 1222), this protein is 4-hydroxy-3-methylbut-2-enyl diphosphate reductase.